A 486-amino-acid chain; its full sequence is Cardiolipin synthase A (486 aa).

2 helical membrane-spanning segments follow: residues 3-23 (IFYDLIKWLVVLIYWLLIANI) and 38-58 (MSWLLTIYIIPFIGIAIWFFF). PLD phosphodiesterase domains lie at 219–246 (LDVRQHRKIILIDNYISYSGSMNLVDPY) and 399–426 (KKGLLHSKSILIDQQLSLIGTVNLDMRS). Residues His224, Lys226, Asp231, His404, Lys406, and Asp411 contribute to the active site.

The protein belongs to the phospholipase D family. Cardiolipin synthase subfamily. ClsA sub-subfamily.

It localises to the cell inner membrane. It carries out the reaction 2 a 1,2-diacyl-sn-glycero-3-phospho-(1'-sn-glycerol) = a cardiolipin + glycerol. Functionally, catalyzes the reversible phosphatidyl group transfer from one phosphatidylglycerol molecule to another to form cardiolipin (CL) (diphosphatidylglycerol) and glycerol. The sequence is that of Cardiolipin synthase A from Buchnera aphidicola subsp. Schizaphis graminum (strain Sg).